The primary structure comprises 227 residues: Cytochrome c oxidase subunit 2 (227 aa).

Over 1–14 (MAYPMQLGFQDATS) the chain is Mitochondrial intermembrane. Residues 15–45 (PIMEELLHFHDHTLMIVFLISSLVLYIISLM) form a helical membrane-spanning segment. The Mitochondrial matrix portion of the chain corresponds to 46 to 59 (LTTKLTHTSTMDAQ). The helical transmembrane segment at 60 to 87 (EVETIWTILPAIILILIALPSLRILYMM) threads the bilayer. Topologically, residues 88 to 227 (DEINNPSLTV…YFEKWSASML (140 aa)) are mitochondrial intermembrane. Cu cation-binding residues include His161, Cys196, Glu198, Cys200, His204, and Met207. Glu198 contributes to the Mg(2+) binding site. A Phosphotyrosine modification is found at Tyr218.

The protein belongs to the cytochrome c oxidase subunit 2 family. As to quaternary structure, component of the cytochrome c oxidase (complex IV, CIV), a multisubunit enzyme composed of 14 subunits. The complex is composed of a catalytic core of 3 subunits MT-CO1, MT-CO2 and MT-CO3, encoded in the mitochondrial DNA, and 11 supernumerary subunits COX4I, COX5A, COX5B, COX6A, COX6B, COX6C, COX7A, COX7B, COX7C, COX8 and NDUFA4, which are encoded in the nuclear genome. The complex exists as a monomer or a dimer and forms supercomplexes (SCs) in the inner mitochondrial membrane with NADH-ubiquinone oxidoreductase (complex I, CI) and ubiquinol-cytochrome c oxidoreductase (cytochrome b-c1 complex, complex III, CIII), resulting in different assemblies (supercomplex SCI(1)III(2)IV(1) and megacomplex MCI(2)III(2)IV(2)). Found in a complex with TMEM177, COA6, COX18, COX20, SCO1 and SCO2. Interacts with TMEM177 in a COX20-dependent manner. Interacts with COX20. Interacts with COX16. Requires Cu cation as cofactor.

Its subcellular location is the mitochondrion inner membrane. The enzyme catalyses 4 Fe(II)-[cytochrome c] + O2 + 8 H(+)(in) = 4 Fe(III)-[cytochrome c] + 2 H2O + 4 H(+)(out). Component of the cytochrome c oxidase, the last enzyme in the mitochondrial electron transport chain which drives oxidative phosphorylation. The respiratory chain contains 3 multisubunit complexes succinate dehydrogenase (complex II, CII), ubiquinol-cytochrome c oxidoreductase (cytochrome b-c1 complex, complex III, CIII) and cytochrome c oxidase (complex IV, CIV), that cooperate to transfer electrons derived from NADH and succinate to molecular oxygen, creating an electrochemical gradient over the inner membrane that drives transmembrane transport and the ATP synthase. Cytochrome c oxidase is the component of the respiratory chain that catalyzes the reduction of oxygen to water. Electrons originating from reduced cytochrome c in the intermembrane space (IMS) are transferred via the dinuclear copper A center (CU(A)) of subunit 2 and heme A of subunit 1 to the active site in subunit 1, a binuclear center (BNC) formed by heme A3 and copper B (CU(B)). The BNC reduces molecular oxygen to 2 water molecules using 4 electrons from cytochrome c in the IMS and 4 protons from the mitochondrial matrix. This is Cytochrome c oxidase subunit 2 (MT-CO2) from Bison bonasus (European bison).